The sequence spans 312 residues: Ribosomal protein L11 methyltransferase (312 aa).

S-adenosyl-L-methionine is bound by residues T164, G185, D207, and N249.

The protein belongs to the methyltransferase superfamily. PrmA family.

Its subcellular location is the cytoplasm. The catalysed reaction is L-lysyl-[protein] + 3 S-adenosyl-L-methionine = N(6),N(6),N(6)-trimethyl-L-lysyl-[protein] + 3 S-adenosyl-L-homocysteine + 3 H(+). Functionally, methylates ribosomal protein L11. This chain is Ribosomal protein L11 methyltransferase, found in Clostridium novyi (strain NT).